Here is a 100-residue protein sequence, read N- to C-terminus: Large ribosomal subunit protein uL23 (100 aa).

The protein belongs to the universal ribosomal protein uL23 family. As to quaternary structure, part of the 50S ribosomal subunit. Contacts protein L29, and trigger factor when it is bound to the ribosome.

In terms of biological role, one of the early assembly proteins it binds 23S rRNA. One of the proteins that surrounds the polypeptide exit tunnel on the outside of the ribosome. Forms the main docking site for trigger factor binding to the ribosome. This chain is Large ribosomal subunit protein uL23, found in Mycobacterium tuberculosis (strain ATCC 25177 / H37Ra).